Reading from the N-terminus, the 241-residue chain is Large ribosomal subunit protein uL30 (241 aa).

The segment at 1–32 (MATTLKPETLQKKEKAQQKTAEERAAAKKVRK) is disordered. Positions 9 to 26 (TLQKKEKAQQKTAEERAA) are enriched in basic and acidic residues.

The protein belongs to the universal ribosomal protein uL30 family. In terms of assembly, component of the large ribosomal subunit. Mature ribosomes consist of a small (40S) and a large (60S) subunit. The 40S subunit contains about 32 different proteins and 1 molecule of RNA (18S). The 60S subunit contains 45 different proteins and 3 molecules of RNA (25S, 5.8S and 5S).

Its subcellular location is the cytoplasm. In terms of biological role, component of the ribosome, a large ribonucleoprotein complex responsible for the synthesis of proteins in the cell. The small ribosomal subunit (SSU) binds messenger RNAs (mRNAs) and translates the encoded message by selecting cognate aminoacyl-transfer RNA (tRNA) molecules. The large subunit (LSU) contains the ribosomal catalytic site termed the peptidyl transferase center (PTC), which catalyzes the formation of peptide bonds, thereby polymerizing the amino acids delivered by tRNAs into a polypeptide chain. The nascent polypeptides leave the ribosome through a tunnel in the LSU and interact with protein factors that function in enzymatic processing, targeting, and the membrane insertion of nascent chains at the exit of the ribosomal tunnel. The protein is Large ribosomal subunit protein uL30 of Candida albicans (strain SC5314 / ATCC MYA-2876) (Yeast).